Reading from the N-terminus, the 854-residue chain is MARRDMAAETMDPRASTEPSPNEPREPARYDHAAVEPRWQRAWEEGETFRAVRSADPARGKRYVLDMFPYPSGSGLHVGHPEGYTATDIMSRYFRMRGIDVLHVMGWDAFGLPAEQHALETGTHPADTTARNIATFKRQLKMLGFSYDWSRELSTTDPRYVRWTQWIFLQLFKKGLAYQDEVSVNWCPALGTVLANEEVIDGKSERGSHPVYRTPLRQWMLRITAYADRLAEDLRLLDWPEGTVAMQRSWIGRSEGALITFEVKGWGKGALSVFTTRPDTLMGVTYVVLAPEHPLTTWLTSAESGASEPRREAVRAYVAAAAGKSDRERLAAAAREKTGVDTGLVAVHPITGVEVPIWVADYVLGGYGTGAVMAVPGHDERDFSFARTYGLPIVEVVSPDGSLHDQLEAAYVDPGVAVRSGEFDGLATEECKRAVIARLEALGRGKREVNYKLRDWVFSRQRYWGEPIPIYFPVELADPQGDPRKGAAHTIRYDQPIAVDEASLPIELPPLADFRPGDDPAGPLARAVDWRFFQRDGKWYARETNTMPQWAGSCWYYLRFLDPQNDAEPFSEAAYDAWMPVDLYVGGAEHGVLHLLYARFWHKVLYDLGHVKHPEPFAKLVHQGMILGEDNEKMSKSRGNVINPDDIVRAHGADVLRMYEMFMGPLEAVKPWQSGQIQGVVRFRDRVFATCTRPLSDAMDDATSRQLHRTIKKVTGDIEGMAFNTAISAMMVFVNHLSSLPSPPREAVLRLILLVSPFAPHLAEELWRLTGHERSLSYEPWPTYDEAFCVDDVLEIPVQVNGKVRGRVMLAKAASEEEARAAALGLETVAALAAGKQLKKFIYVAGKIVNIVVG.

The disordered stretch occupies residues 1–32 (MARRDMAAETMDPRASTEPSPNEPREPARYDH). Over residues 23 to 32 (EPREPARYDH) the composition is skewed to basic and acidic residues. The 'HIGH' region signature appears at 69–80 (PYPSGSGLHVGH). A 'KMSKS' region motif is present at residues 633–637 (KMSKS). Lys636 lines the ATP pocket.

The protein belongs to the class-I aminoacyl-tRNA synthetase family.

It localises to the cytoplasm. The catalysed reaction is tRNA(Leu) + L-leucine + ATP = L-leucyl-tRNA(Leu) + AMP + diphosphate. This chain is Leucine--tRNA ligase, found in Sorangium cellulosum (strain So ce56) (Polyangium cellulosum (strain So ce56)).